Here is a 509-residue protein sequence, read N- to C-terminus: Protein disulfide-isomerase (509 aa).

A signal peptide spans 1–19 (MLSRALLCLALAWAARVGA). Residues 20 to 136 (DALEEEDNVL…IVNWLKKRTG (117 aa)) form the Thioredoxin 1 domain. Active-site nucleophile residues include C55 and C58. C55 and C58 are joined by a disulfide. Position 202 is an N6-acetyllysine (K202). Residues K224 and K273 each carry the N6-succinyllysine modification. 2 positions are modified to phosphoserine: S333 and S359. The 143-residue stretch at 335 to 477 (ELTAEKITQF…FKKFLESGGQ (143 aa)) folds into the Thioredoxin 2 domain. Catalysis depends on nucleophile residues C399 and C402. C399 and C402 are joined by a disulfide. Phosphoserine is present on S429. Positions 506–509 (KDEL) match the Prevents secretion from ER motif.

The protein belongs to the protein disulfide isomerase family. In terms of assembly, heterodimer; heterodimerizes with the protein microsomal triglyceride transfer MTTP. Homodimer. Monomers and homotetramers may also occur. Interacts with P4HA2, forming a heterotetramer consisting of 2 alpha subunits (P4HA2) and 2 beta (P4HB), where P4HB plays the role of a structural subunit; this tetramer catalyzes the formation of 4-hydroxyproline in collagen. Also constitutes the structural subunit of the microsomal triacylglycerol transfer protein MTTP in mammalian cells. Stabilizes both enzymes and retain them in the ER without contributing to the catalytic activity. Binds UBQLN1. Interacts with ERO1B. Interacts with ILDR2. Interacts with ERN1/IRE1A (via N-terminus); the interaction is enhanced by phosphorylation of P4HB by FAM20C in response to endoplasmic reticulum stress and results in attenuation of ERN1 activity. In terms of processing, phosphorylation of Ser-359 by FAM20C is induced by endoplasmic reticulum stress and results in a functional switch from oxidoreductase to molecular chaperone. It also promotes interaction with ERN1.

It is found in the endoplasmic reticulum. It localises to the endoplasmic reticulum lumen. The protein localises to the melanosome. Its subcellular location is the cell membrane. The enzyme catalyses Catalyzes the rearrangement of -S-S- bonds in proteins.. This multifunctional protein catalyzes the formation, breakage and rearrangement of disulfide bonds. At the cell surface, seems to act as a reductase that cleaves disulfide bonds of proteins attached to the cell. May therefore cause structural modifications of exofacial proteins. Inside the cell, seems to form/rearrange disulfide bonds of nascent proteins. At high concentrations and following phosphorylation by FAM20C, functions as a chaperone that inhibits aggregation of misfolded proteins. At low concentrations, facilitates aggregation (anti-chaperone activity). May be involved with other chaperones in the structural modification of the TG precursor in hormone biogenesis. Also acts as a structural subunit of various enzymes such as prolyl 4-hydroxylase and microsomal triacylglycerol transfer protein MTTP. Receptor for LGALS9; the interaction retains P4HB at the cell surface of Th2 T helper cells, increasing disulfide reductase activity at the plasma membrane, altering the plasma membrane redox state and enhancing cell migration. In Rattus norvegicus (Rat), this protein is Protein disulfide-isomerase (P4hb).